Here is a 1044-residue protein sequence, read N- to C-terminus: Unconventional myosin-Ic (1044 aa).

A Myosin motor domain is found at 28 to 712 (GVQDFVLLEN…TLFATEDSLE (685 aa)). Residues Asn69, Tyr77, 120–129 (SGESGAGKTE), and 173–177 (NDNSS) each bind ATP. Lys364 is modified (N6-methyllysine). At Ser389 the chain carries Phosphoserine. Lys467 is modified (N6-acetyllysine). At Ser517 the chain carries Phosphoserine. Residues 589–611 (LLQLVEILRSKEPAYIRCIKPND) form an actin-binding region. IQ domains are found at residues 715-744 (RQSLATKIQAAWRGFHWRQKFLRVKRSAIC) and 738-767 (VKRSAICIQSWWRGTLGRRKAAKRKWAAQT). A phosphoserine mark is found at Ser845 and Ser1022. In terms of domain architecture, TH1 spans 866–1040 (KDNYPQSVPR…NGHLAVVAPR (175 aa)).

This sequence belongs to the TRAFAC class myosin-kinesin ATPase superfamily. Myosin family. In terms of assembly, interacts (via its IQ motifs) with CABP1 and CIB1; the interaction with CABP1 and CIB1 is calcium-dependent. Interacts (via tail domain) with PLEKHB1 (via PH domain); the interaction is not affected by the presence or absence of calcium and CALM. Interacts with POLR1A. Interacts with POLR2A. Component of the B-WICH complex, at least composed of SMARCA5/SNF2H, BAZ1B/WSTF, SF3B1, DEK, MYO1C, ERCC6, MYBBP1A and DDX21. Interacts (via its IQ motifs) with CALM; this precludes interaction with YWHAB. Interacts with YWHAB; this precludes interaction with CALM. Interacts with RPS6. Interacts with actin. Interacts with LLPH. Interacts with GLUT4. Interacts (via its IQ motifs) with SH3BGRL3; the interaction is dependent on calcium and takes place at membrane ruffles.

The protein localises to the cytoplasm. It is found in the nucleus. Its subcellular location is the cell cortex. It localises to the cell projection. The protein resides in the stereocilium membrane. The protein localises to the cytoplasmic vesicle. It is found in the ruffle membrane. In terms of biological role, myosins are actin-based motor molecules with ATPase activity. Unconventional myosins serve in intracellular movements. Their highly divergent tails are presumed to bind to membranous compartments, which would be moved relative to actin filaments. Involved in glucose transporter recycling in response to insulin by regulating movement of intracellular GLUT4-containing vesicles to the plasma membrane. Component of the hair cell's (the sensory cells of the inner ear) adaptation-motor complex. Acts as a mediator of adaptation of mechanoelectrical transduction in stereocilia of vestibular hair cells. Binds phosphoinositides and links the actin cytoskeleton to cellular membranes. The polypeptide is Unconventional myosin-Ic (Myo1c) (Rattus norvegicus (Rat)).